Here is a 72-residue protein sequence, read N- to C-terminus: Conotoxin Ep11.1 (72 aa).

An N-terminal signal peptide occupies residues 1-19 (MKLCVTFLLILVILPSVTG). A propeptide spanning residues 20-32 (EKSSKRTLSGAAL) is cleaved from the precursor. 4 disulfide bridges follow: cysteine 39/cysteine 53, cysteine 46/cysteine 58, cysteine 52/cysteine 63, and cysteine 57/cysteine 70.

Belongs to the conotoxin I1 superfamily. In terms of tissue distribution, expressed by the venom duct.

The protein resides in the secreted. The protein is Conotoxin Ep11.1 of Conus episcopatus (Bishop's cone).